A 345-amino-acid chain; its full sequence is Phosphoribosylformylglycinamidine cyclo-ligase (345 aa).

The protein belongs to the AIR synthase family.

Its subcellular location is the cytoplasm. It carries out the reaction 2-formamido-N(1)-(5-O-phospho-beta-D-ribosyl)acetamidine + ATP = 5-amino-1-(5-phospho-beta-D-ribosyl)imidazole + ADP + phosphate + H(+). It functions in the pathway purine metabolism; IMP biosynthesis via de novo pathway; 5-amino-1-(5-phospho-D-ribosyl)imidazole from N(2)-formyl-N(1)-(5-phospho-D-ribosyl)glycinamide: step 2/2. The chain is Phosphoribosylformylglycinamidine cyclo-ligase from Pectobacterium atrosepticum (strain SCRI 1043 / ATCC BAA-672) (Erwinia carotovora subsp. atroseptica).